The primary structure comprises 548 residues: Glucose-6-phosphate isomerase (548 aa).

Catalysis depends on Glu355, which acts as the Proton donor. Active-site residues include His386 and Lys514.

It belongs to the GPI family.

It is found in the cytoplasm. It catalyses the reaction alpha-D-glucose 6-phosphate = beta-D-fructose 6-phosphate. The protein operates within carbohydrate biosynthesis; gluconeogenesis. Its pathway is carbohydrate degradation; glycolysis; D-glyceraldehyde 3-phosphate and glycerone phosphate from D-glucose: step 2/4. Its function is as follows. Catalyzes the reversible isomerization of glucose-6-phosphate to fructose-6-phosphate. The sequence is that of Glucose-6-phosphate isomerase from Yersinia pestis (strain Pestoides F).